A 95-amino-acid polypeptide reads, in one-letter code: Small ribosomal subunit protein bS6 (95 aa).

The protein belongs to the bacterial ribosomal protein bS6 family.

Functionally, binds together with bS18 to 16S ribosomal RNA. The protein is Small ribosomal subunit protein bS6 of Corynebacterium glutamicum (strain ATCC 13032 / DSM 20300 / JCM 1318 / BCRC 11384 / CCUG 27702 / LMG 3730 / NBRC 12168 / NCIMB 10025 / NRRL B-2784 / 534).